Here is a 150-residue protein sequence, read N- to C-terminus: Copper transporter 3 (150 aa).

Helical transmembrane passes span 50-70 (GGMYALALAAVFALAVLLEFL) and 100-120 (LAYLLMLALMSFNVGVLLAAV).

The protein belongs to the copper transporter (Ctr) (TC 1.A.56) family. SLC31A subfamily.

Its subcellular location is the membrane. Its function is as follows. Involved in the transport of copper. The polypeptide is Copper transporter 3 (COPT3) (Oryza sativa subsp. japonica (Rice)).